The sequence spans 293 residues: Elongation factor Ts (293 aa).

The segment at 80 to 83 (TDFV) is involved in Mg(2+) ion dislocation from EF-Tu.

It belongs to the EF-Ts family.

The protein resides in the cytoplasm. Its function is as follows. Associates with the EF-Tu.GDP complex and induces the exchange of GDP to GTP. It remains bound to the aminoacyl-tRNA.EF-Tu.GTP complex up to the GTP hydrolysis stage on the ribosome. The polypeptide is Elongation factor Ts (Staphylococcus aureus (strain Newman)).